The primary structure comprises 65 residues: Orally active insecticidal peptide-3 (65 aa).

An N-terminal signal peptide occupies residues Met1–Gly21. A propeptide spanning residues Val22–Arg29 is cleaved from the precursor. Intrachain disulfides connect Cys31–Cys46, Cys38–Cys51, and Cys45–Cys58. Pro62 is subject to Proline amide.

It belongs to the neurotoxin 10 (Hwtx-1) family. 46 (Jztx-7/10/12) subfamily. Expressed by the venom gland.

It localises to the secreted. Its function is as follows. Probable ion channel inhibitor. Shows insecticidal activity when injected into mealworms. This Selenotypus plumipes (Australian featherleg tarantula) protein is Orally active insecticidal peptide-3.